Reading from the N-terminus, the 419-residue chain is Odorant receptor 56a (419 aa).

The Cytoplasmic portion of the chain corresponds to 1 to 41; that stretch reads MFKVKDLLLSPTTFEDPIFGTHLRYFQWYGYVASKDQNRPL. A helical transmembrane segment spans residues 42–62; it reads LSLIRCTILTASIWLSCALML. The Extracellular portion of the chain corresponds to 63 to 76; that stretch reads ARVFRGYENLNDGA. The helical transmembrane segment at 77-97 threads the bilayer; it reads TSYATAVQYFAVSIAMFNAYV. Residues 98-137 are Cytoplasmic-facing; sequence QRDKVISLLRVAHSDIQNLMHEADNREMELLVATQAYTRT. The helical transmembrane segment at 138–158 threads the bilayer; sequence ITLLIWIPSVIAGLMAYSDCI. Topologically, residues 159-196 are extracellular; the sequence is YRSLFLPKSVFNVPAVRRGEEHPILLFQLFPFGELCDN. A helical transmembrane segment spans residues 197–217; that stretch reads FVVGYLGPWYALGLGITAIPL. Over 218–292 the chain is Cytoplasmic; the sequence is WHTFITCLMK…FVQELQYLIC (75 aa). Residues 293–313 traverse the membrane as a helical segment; it reads VPVMADFIIFSVLICFLFFAL. Topologically, residues 314–323 are extracellular; that stretch reads TVGVPSKMDY. A helical membrane pass occupies residues 324 to 344; that stretch reads FFMFIYLFVMAGILWIYHWHA. Topologically, residues 345–389 are cytoplasmic; it reads TLIVECHDELSLAYFSCGWYNFEMPLQKMLVFMMMHAQRPMKMRA. Residues 390 to 410 form a helical membrane-spanning segment; the sequence is LLVDLNLRTFIDIGRGAYSYF. The Extracellular portion of the chain corresponds to 411–419; that stretch reads NLLRSSHLY.

Belongs to the insect chemoreceptor superfamily. Heteromeric odorant receptor channel (TC 1.A.69) family. Or30a subfamily. In terms of assembly, interacts with Orco. Complexes exist early in the endomembrane system in olfactory sensory neurons (OSNs), coupling these complexes to the conserved ciliary trafficking pathway. In terms of tissue distribution, expressed in olfactory sensory neurons in the antenna.

Its subcellular location is the cell membrane. Odorant receptor which mediates acceptance or avoidance behavior, depending on its substrates. The odorant receptor repertoire encodes a large collection of odor stimuli that vary widely in identity, intensity, and duration. May form a complex with Orco to form odorant-sensing units, providing sensitive and prolonged odorant signaling and calcium permeability. Specific receptor for geosmin, a microbial odorant that constitutes an ecologically relevant stimulus that alerts flies to the presence of harmful microbes and induces avoidance behavior. The polypeptide is Odorant receptor 56a (Or56a) (Drosophila melanogaster (Fruit fly)).